The chain runs to 64 residues: Large ribosomal subunit protein bL28c (64 aa).

The protein belongs to the bacterial ribosomal protein bL28 family.

The protein localises to the plastid. Its subcellular location is the chloroplast. The polypeptide is Large ribosomal subunit protein bL28c (Gracilaria tenuistipitata var. liui (Red alga)).